The following is a 67-amino-acid chain: Protein AaeX (67 aa).

The next 2 membrane-spanning stretches (helical) occupy residues 3 to 23 (LFPV…ELLL) and 43 to 63 (FVWH…YLIS).

It belongs to the AaeX family.

It localises to the cell membrane. The chain is Protein AaeX from Escherichia coli (strain K12 / DH10B).